The following is a 98-amino-acid chain: Large ribosomal subunit protein uL23 (98 aa).

Belongs to the universal ribosomal protein uL23 family. In terms of assembly, part of the 50S ribosomal subunit. Contacts protein L29, and trigger factor when it is bound to the ribosome.

In terms of biological role, one of the early assembly proteins it binds 23S rRNA. One of the proteins that surrounds the polypeptide exit tunnel on the outside of the ribosome. Forms the main docking site for trigger factor binding to the ribosome. In Marinomonas sp. (strain MWYL1), this protein is Large ribosomal subunit protein uL23.